Here is a 154-residue protein sequence, read N- to C-terminus: Probable chemoreceptor glutamine deamidase CheD (154 aa).

This sequence belongs to the CheD family.

It catalyses the reaction L-glutaminyl-[protein] + H2O = L-glutamyl-[protein] + NH4(+). In terms of biological role, probably deamidates glutamine residues to glutamate on methyl-accepting chemotaxis receptors (MCPs), playing an important role in chemotaxis. The chain is Probable chemoreceptor glutamine deamidase CheD from Methanococcus vannielii (strain ATCC 35089 / DSM 1224 / JCM 13029 / OCM 148 / SB).